Consider the following 344-residue polypeptide: Serpentine receptor class delta-3 (344 aa).

The next 7 helical transmembrane spans lie at 21–41 (IIGY…IILI), 54–74 (MLHL…MLAL), 102–122 (FLHV…MISF), 142–162 (ICIL…SDVA), 203–223 (FSAI…IVFF), 259–279 (IVPI…FQVV), and 287–307 (MPFR…LYFV).

The protein belongs to the nematode receptor-like protein srd family.

Its subcellular location is the membrane. This Caenorhabditis elegans protein is Serpentine receptor class delta-3 (srd-3).